Consider the following 432-residue polypeptide: Glutamyl-tRNA reductase (432 aa).

Substrate is bound by residues 49–52, serine 107, 112–114, and glutamine 118; these read TCNR and ETQ. Catalysis depends on cysteine 50, which acts as the Nucleophile. Residue 186-191 participates in NADP(+) binding; sequence GAGEMG.

The protein belongs to the glutamyl-tRNA reductase family. In terms of assembly, homodimer.

It carries out the reaction (S)-4-amino-5-oxopentanoate + tRNA(Glu) + NADP(+) = L-glutamyl-tRNA(Glu) + NADPH + H(+). It functions in the pathway porphyrin-containing compound metabolism; protoporphyrin-IX biosynthesis; 5-aminolevulinate from L-glutamyl-tRNA(Glu): step 1/2. Functionally, catalyzes the NADPH-dependent reduction of glutamyl-tRNA(Glu) to glutamate 1-semialdehyde (GSA). The polypeptide is Glutamyl-tRNA reductase (Campylobacter jejuni subsp. jejuni serotype O:2 (strain ATCC 700819 / NCTC 11168)).